The chain runs to 182 residues: Large ribosomal subunit protein bL25 (182 aa).

The protein belongs to the bacterial ribosomal protein bL25 family. CTC subfamily. Part of the 50S ribosomal subunit; part of the 5S rRNA/L5/L18/L25 subcomplex. Contacts the 5S rRNA. Binds to the 5S rRNA independently of L5 and L18.

Functionally, this is one of the proteins that binds to the 5S RNA in the ribosome where it forms part of the central protuberance. The sequence is that of Large ribosomal subunit protein bL25 from Borrelia hermsii (strain HS1 / DAH).